Here is a 1235-residue protein sequence, read N- to C-terminus: Structural maintenance of chromosomes protein 1B (1235 aa).

32-39 (GPNGSGKS) lines the ATP pocket. Positions 156–490 (EEISTSGELI…RSELQNAGID (335 aa)) form a coiled coil. Positions 514–629 (SVFGRLFDLC…ETMEEARHIA (116 aa)) constitute an SMC hinge domain. Lys648 and Lys713 each carry N6-acetyllysine. Coiled-coil stretches lie at residues 666–934 (WDEK…LDCK), 970–994 (EKEEAFEIDYSSLKEDLKALQSDQE), and 1022–1049 (RALENLKTVRDKFQESTDAFEASRKEAR). Lys1033 is modified (N6-acetyllysine).

The protein belongs to the SMC family. SMC1 subfamily. As to quaternary structure, forms a heterodimer with SMC3. Component of a meiosis-specific cohesin complex, probably composed of the SMC1B and SMC3 heterodimer attached via their SMC hinge domain, RAD21 (or its meiosis-specific related protein REC8), which link them, and STAG3, which interacts with RAD21 or REC8. The cohesin complex interacts with the cohesin loading complex subunits NIPBL/Scc2 (via HEAT repeats) and MAU2/Scc4. NIPBL directly contacts all members of the complex, RAD21, SMC1A/B, SMC3 and STAG1.

The protein resides in the nucleus. The protein localises to the chromosome. It localises to the centromere. In terms of biological role, meiosis-specific component of cohesin complex. Required for the maintenance of meiotic cohesion, but not, or only to a minor extent, for its establishment. Contributes to axial element (AE) formation and the organization of chromatin loops along the AE. Plays a key role in synapsis, recombination and chromosome movements. The cohesin complex is required for the cohesion of sister chromatids after DNA replication. The cohesin complex apparently forms a large proteinaceous ring within which sister chromatids can be trapped. At anaphase, the complex is cleaved and dissociates from chromatin, allowing sister chromatids to segregate. The meiosis-specific cohesin complex probably replaces mitosis specific cohesin complex when it dissociates from chromatin during prophase I. The chain is Structural maintenance of chromosomes protein 1B (SMC1B) from Homo sapiens (Human).